Reading from the N-terminus, the 720-residue chain is 1,4-alpha-glucan branching enzyme GlgB (720 aa).

The active-site Nucleophile is the aspartate 400. Glutamate 453 acts as the Proton donor in catalysis.

This sequence belongs to the glycosyl hydrolase 13 family. GlgB subfamily. As to quaternary structure, monomer.

It carries out the reaction Transfers a segment of a (1-&gt;4)-alpha-D-glucan chain to a primary hydroxy group in a similar glucan chain.. It functions in the pathway glycan biosynthesis; glycogen biosynthesis. Functionally, catalyzes the formation of the alpha-1,6-glucosidic linkages in glycogen by scission of a 1,4-alpha-linked oligosaccharide from growing alpha-1,4-glucan chains and the subsequent attachment of the oligosaccharide to the alpha-1,6 position. This chain is 1,4-alpha-glucan branching enzyme GlgB, found in Chlamydia pneumoniae (Chlamydophila pneumoniae).